A 1291-amino-acid chain; its full sequence is Capping protein-inhibiting regulator of actin dynamics (1291 aa).

Phosphoserine is present on residues Ser7 and Ser28. Disordered regions lie at residues 48-71 (KFGQ…SSEE), 84-137 (QQDI…AGTI), 159-221 (HKLA…HEEK), 234-253 (KCKR…EQRR), 267-663 (QELL…ASHA), and 701-1238 (LGLS…TSVT). Ser132 is subject to Phosphoserine. Positions 159–176 (HKLAVKPKNQRVSRKHRW) are enriched in basic residues. Residues 184–199 (EPGSFESQSSLDQNGQ) are compositionally biased toward polar residues. Over residues 201–221 (GEDKHIWHGEEPEPLESHEEK) the composition is skewed to basic and acidic residues. Residues 270–291 (LEEEEEGEEEEEVKEEGEEGEE) show a composition bias toward acidic residues. 3 stretches are compositionally biased toward basic and acidic residues: residues 302 to 318 (PPEE…RCTE), 326 to 461 (DPAR…EDAK), and 470 to 483 (EAKR…KETP). A required for interaction with actin-capping proteins region spans residues 324–560 (ADDPARLEAE…DLDAHCGGVD (237 aa)). The residue at position 482 (Thr482) is a Phosphothreonine. 2 positions are modified to phosphoserine: Ser493 and Ser510. Composition is skewed to basic and acidic residues over residues 506–527 (ADQR…REDL) and 534–543 (EIAEEPRGEG). Low complexity predominate over residues 580 to 593 (EGTPAPEENEATAA). Positions 594 to 612 (DIDRKVEELRWQEVDERQT) are enriched in basic and acidic residues. A Phosphoserine modification is found at Ser636. Thr639 carries the phosphothreonine modification. Residues 749–778 (KNSEGDQRGDREPARAGDEPVPRARCDSRG) show a composition bias toward basic and acidic residues. Ser867 is modified (phosphoserine). Over residues 875-888 (TESTTTLDSETTSD) the composition is skewed to low complexity. Positions 969-983 (QERKPALSPRKDSAE) are enriched in basic and acidic residues. Thr1033 is subject to Phosphothreonine. Residue Ser1037 is modified to Phosphoserine. Positions 1056-1070 (GKLDSEPSETAKESS) are enriched in basic and acidic residues. The residue at position 1076 (Ser1076) is a Phosphoserine. 3 stretches are compositionally biased toward basic and acidic residues: residues 1081 to 1098 (EELK…EKKP), 1117 to 1141 (TGRK…EKVE), and 1157 to 1182 (GFRE…KLSK). 2 stretches are compositionally biased toward polar residues: residues 1183–1197 (ETVS…SRAS) and 1229–1238 (KSNTLPTSVT).

As to quaternary structure, directly interacts with actin-capping proteins CAPZA1, CAPZA2 and CAPZB; this interaction decreases the binding of capping proteins to actin. As to expression, expressed in the small intestine (at protein level).

Its subcellular location is the cytoplasm. The protein resides in the cytosol. Its function is as follows. Involved in epithelial cell integrity by acting on the dynamics of the actin cytoskeleton. Positively regulates the actin polymerization, by inhibiting the interaction of actin-capping proteins with actin. This chain is Capping protein-inhibiting regulator of actin dynamics, found in Mus musculus (Mouse).